A 218-amino-acid chain; its full sequence is Fibroblast growth factor 15 (218 aa).

The signal sequence occupies residues 1-25 (MARKWNGRAVARALVLATLWLAVSG).

It belongs to the heparin-binding growth factors family. As to quaternary structure, interacts with MALRD1. In terms of tissue distribution, expressed in the developing brain.

It is found in the secreted. Its function is as follows. Involved in the suppression of bile acid biosynthesis through down-regulation of CYP7A1 expression. This is Fibroblast growth factor 15 (Fgf15) from Mus musculus (Mouse).